Consider the following 322-residue polypeptide: Pantothenate kinase (322 aa).

100 to 107 contacts ATP; it reads GSVAVGKS.

It belongs to the prokaryotic pantothenate kinase family.

Its subcellular location is the cytoplasm. It carries out the reaction (R)-pantothenate + ATP = (R)-4'-phosphopantothenate + ADP + H(+). The protein operates within cofactor biosynthesis; coenzyme A biosynthesis; CoA from (R)-pantothenate: step 1/5. This Brucella abortus (strain 2308) protein is Pantothenate kinase.